Consider the following 376-residue polypeptide: Sulfate/thiosulfate import ATP-binding protein CysA (376 aa).

The 235-residue stretch at I3 to F237 folds into the ABC transporter domain. Residue G35 to T42 participates in ATP binding.

It belongs to the ABC transporter superfamily. Sulfate/tungstate importer (TC 3.A.1.6) family. As to quaternary structure, the complex is composed of two ATP-binding proteins (CysA), two transmembrane proteins (CysT and CysW) and a solute-binding protein (CysP).

The protein localises to the cell inner membrane. It catalyses the reaction sulfate(out) + ATP + H2O = sulfate(in) + ADP + phosphate + H(+). The catalysed reaction is thiosulfate(out) + ATP + H2O = thiosulfate(in) + ADP + phosphate + H(+). Its function is as follows. Part of the ABC transporter complex CysAWTP involved in sulfate/thiosulfate import. Responsible for energy coupling to the transport system. This is Sulfate/thiosulfate import ATP-binding protein CysA from Vibrio cholerae serotype O1 (strain ATCC 39315 / El Tor Inaba N16961).